The sequence spans 1023 residues: RTX-I toxin determinant A from serotypes 5/10 (1023 aa).

The next 3 membrane-spanning stretches (helical) occupy residues 226-256 (NNLP…ILSN), 297-326 (STTA…ADKF), and 367-406 (INSV…SGIL). 6 Hemolysin-type calcium-binding repeats span residues 730 to 747 (FGSR…DDEI), 748 to 765 (YGND…NDVI), 766 to 783 (HGGD…NDRL), 784 to 801 (IGGK…DDEL), 812 to 829 (LGGA…TNLF), and 830 to 847 (DGGV…KDIY).

This sequence belongs to the RTX prokaryotic toxin (TC 1.C.11) family. Palmitoylated by ApxIC. The toxin only becomes active when modified.

The protein resides in the secreted. The protein localises to the host cell membrane. In terms of biological role, one of the virulence factors of A.pleuropneumoniae, which has a strong hemolytic activity and is cytotoxic for alveolar macrophages and neutrophils. This chain is RTX-I toxin determinant A from serotypes 5/10 (apxIA), found in Actinobacillus pleuropneumoniae (Haemophilus pleuropneumoniae).